A 202-amino-acid polypeptide reads, in one-letter code: Small ribosomal subunit protein uS4c (202 aa).

In terms of domain architecture, S4 RNA-binding spans 90 to 153 (MRLDNVIFRL…KSEAIISKNI (64 aa)).

Belongs to the universal ribosomal protein uS4 family. As to quaternary structure, part of the 30S ribosomal subunit. Contacts protein S5. The interaction surface between S4 and S5 is involved in control of translational fidelity.

The protein localises to the plastid. It localises to the chloroplast. Functionally, one of the primary rRNA binding proteins, it binds directly to 16S rRNA where it nucleates assembly of the body of the 30S subunit. Its function is as follows. With S5 and S12 plays an important role in translational accuracy. The sequence is that of Small ribosomal subunit protein uS4c (rps4) from Hypopterygium laricinum (Moss).